Here is a 683-residue protein sequence, read N- to C-terminus: ATP-dependent zinc metalloprotease FtsH (683 aa).

Positions 1-43 (MEDKNIKDDEILDDQNDNQEDVQNQDEEKEIKPKKPKKKVYIS) are disordered. Residues 1–70 (MEDKNIKDDE…KNNNISFRVK (70 aa)) are Cytoplasmic-facing. Over residues 10 to 28 (EILDDQNDNQEDVQNQDEE) the composition is skewed to acidic residues. Residues 71–91 (PPIFFFLILILMSTLFYFYGN) form a helical membrane-spanning segment. Residues 92-174 (KTALFQEKRE…IVVLGTPVSS (83 aa)) lie on the Periplasmic side of the membrane. A helical transmembrane segment spans residues 175 to 195 (IITRAIFSFAPLFMLLFFFYF). The Cytoplasmic portion of the chain corresponds to 196 to 683 (INKKMMGSSG…LDDEQLEKYY (488 aa)). Residue 270–277 (GEPGTGKT) participates in ATP binding. Zn(2+) is bound at residue His-494. Residue Glu-495 is part of the active site. The Zn(2+) site is built by His-498 and Asp-569.

The protein in the central section; belongs to the AAA ATPase family. This sequence in the C-terminal section; belongs to the peptidase M41 family. Homohexamer. It depends on Zn(2+) as a cofactor.

The protein resides in the cell inner membrane. Functionally, acts as a processive, ATP-dependent zinc metallopeptidase for both cytoplasmic and membrane proteins. Plays a role in the quality control of integral membrane proteins. The sequence is that of ATP-dependent zinc metalloprotease FtsH from Streptobacillus moniliformis (strain ATCC 14647 / DSM 12112 / NCTC 10651 / 9901).